A 111-amino-acid polypeptide reads, in one-letter code: Iron-sulfur cluster insertion protein ErpA (111 aa).

Iron-sulfur cluster contacts are provided by C39, C103, and C105.

Belongs to the HesB/IscA family. In terms of assembly, homodimer. The cofactor is iron-sulfur cluster.

In terms of biological role, required for insertion of 4Fe-4S clusters for at least IspG. The polypeptide is Iron-sulfur cluster insertion protein ErpA (Acinetobacter baumannii (strain AB307-0294)).